A 258-amino-acid polypeptide reads, in one-letter code: Imidazole glycerol phosphate synthase subunit HisF (258 aa).

Residues Asp-11 and Asp-130 contribute to the active site.

Belongs to the HisA/HisF family. Heterodimer of HisH and HisF.

The protein resides in the cytoplasm. The enzyme catalyses 5-[(5-phospho-1-deoxy-D-ribulos-1-ylimino)methylamino]-1-(5-phospho-beta-D-ribosyl)imidazole-4-carboxamide + L-glutamine = D-erythro-1-(imidazol-4-yl)glycerol 3-phosphate + 5-amino-1-(5-phospho-beta-D-ribosyl)imidazole-4-carboxamide + L-glutamate + H(+). It functions in the pathway amino-acid biosynthesis; L-histidine biosynthesis; L-histidine from 5-phospho-alpha-D-ribose 1-diphosphate: step 5/9. In terms of biological role, IGPS catalyzes the conversion of PRFAR and glutamine to IGP, AICAR and glutamate. The HisF subunit catalyzes the cyclization activity that produces IGP and AICAR from PRFAR using the ammonia provided by the HisH subunit. The polypeptide is Imidazole glycerol phosphate synthase subunit HisF (Escherichia fergusonii (strain ATCC 35469 / DSM 13698 / CCUG 18766 / IAM 14443 / JCM 21226 / LMG 7866 / NBRC 102419 / NCTC 12128 / CDC 0568-73)).